Reading from the N-terminus, the 514-residue chain is Putative fucosyltransferase 10 (514 aa).

Residues Asn-185, Asn-210, Asn-355, Asn-377, and Asn-456 are each glycosylated (N-linked (GlcNAc...) asparagine).

It belongs to the glycosyltransferase 37 family. In terms of tissue distribution, expressed in root, leaves, stems and seedlings.

The protein resides in the golgi apparatus. Its pathway is protein modification; protein glycosylation. Its function is as follows. May be involved in cell wall biosynthesis. May act as a fucosyltransferase. In Arabidopsis thaliana (Mouse-ear cress), this protein is Putative fucosyltransferase 10 (FUT10).